The sequence spans 173 residues: Succinate dehydrogenase assembly factor 3, mitochondrial (173 aa).

The N-terminal 59 residues, 1–59 (MFRPSTSLALRSTLRQLASASNQPIPPGSEINAVKRTVATILPPIRLYRRIIRAHRRLD), are a transit peptide targeting the mitochondrion. Residues 149–173 (FPPEKQRELAEKAAADAGLSVKKDE) are disordered. The segment covering 152–162 (EKQRELAEKAA) has biased composition (basic and acidic residues).

Belongs to the complex I LYR family. SDHAF3 subfamily. As to quaternary structure, interacts with the iron-sulfur protein subunit within the SDH catalytic dimer.

The protein localises to the mitochondrion matrix. Its function is as follows. Plays an essential role in the assembly of succinate dehydrogenase (SDH), an enzyme complex (also referred to as respiratory complex II) that is a component of both the tricarboxylic acid (TCA) cycle and the mitochondrial electron transport chain, and which couples the oxidation of succinate to fumarate with the reduction of ubiquinone (coenzyme Q) to ubiquinol. Promotes maturation of the iron-sulfur protein subunit of the SDH catalytic dimer, protecting it from the deleterious effects of oxidants. May act together with SDHAF1. This Mycosarcoma maydis (Corn smut fungus) protein is Succinate dehydrogenase assembly factor 3, mitochondrial.